Consider the following 72-residue polypeptide: UPF0270 protein YheU (72 aa).

It belongs to the UPF0270 family.

The chain is UPF0270 protein YheU from Escherichia coli (strain UTI89 / UPEC).